We begin with the raw amino-acid sequence, 340 residues long: METMLFSPYTIRGVTIKNRIVMSPMCMYSCDTEDGKVRNWHKIHYPTRAVGQVGLIIVEATAVAAQGRISSRDLGIWSDEHVDGLRELASLVKEHGAKIGIQLAHAGRKSEVDGEIIAPSAIPFSEKTRTPKEMTKADIEETIQAFQNGARRAKEAGFDIIEIHGAHGYLINEFLSPLSNRRQDEYGGSPENRYRFLGEIIDAVREVWDGPLFVRISASDYHPEGLTVKDYVPYAKRMKEQGVDLIDVSSGAVVPAKIRVYPGYQVPFAETIRREANIATGAVGLITSGLQAEEILRNGRADLVFLARELLRNPYWPYAAAKELGTTISASVQYERGWRF.

Residue 23–26 (SPMC) participates in FMN binding. Tyrosine 28 serves as a coordination point for substrate. 2 residues coordinate FMN: alanine 60 and glutamine 102. 164–167 (HGAH) is a binding site for substrate. FMN is bound by residues arginine 215 and 307-308 (AR).

Belongs to the NADH:flavin oxidoreductase/NADH oxidase family. NamA subfamily. In terms of assembly, homotetramer. FMN is required as a cofactor.

It catalyses the reaction A + NADPH + H(+) = AH2 + NADP(+). Catalyzes the reduction of the double bond of an array of alpha,beta-unsaturated aldehydes and ketones. It also reduces the nitro group of nitroester and nitroaromatic compounds. It could have a role in detoxification processes. The polypeptide is NADPH dehydrogenase (Geobacillus sp. (strain WCH70)).